Consider the following 104-residue polypeptide: Meiotically up-regulated gene 150 protein (104 aa).

The next 3 helical transmembrane spans lie at 30 to 50 (FFLK…KAWI), 54 to 74 (TISL…IPYF), and 84 to 104 (LLWF…SLEI).

It is found in the endoplasmic reticulum membrane. In terms of biological role, has a role in meiosis. The sequence is that of Meiotically up-regulated gene 150 protein (mug150) from Schizosaccharomyces pombe (strain 972 / ATCC 24843) (Fission yeast).